We begin with the raw amino-acid sequence, 396 residues long: Cytochrome b (396 aa).

The next 4 membrane-spanning stretches (helical) occupy residues 37 to 57 (FGSLLSLCLILQIITGLILAM), 81 to 102 (WLMRNLHANGASMFFICIYAHI), 117 to 137 (WNVGVILFALTAATAFVGYVL), and 182 to 202 (FFTFHFILPFILAAMTMIHIM). Residues histidine 87 and histidine 101 each contribute to the heme b site. Heme b is bound by residues histidine 186 and histidine 200. Histidine 205 is a binding site for a ubiquinone. 4 helical membrane passes run 230-250 (FKDILGFVILLGILFMISLLA), 292-312 (LGGVVALAAAIMILLIIPFTH), 324-344 (LAQITFWILIADLALLTWLGG), and 351-371 (FILMTQIASTVYFMIFILVFP).

Belongs to the cytochrome b family. The cytochrome bc1 complex contains 3 respiratory subunits (MT-CYB, CYC1 and UQCRFS1), 2 core proteins (UQCRC1 and UQCRC2) and probably 6 low-molecular weight proteins. Heme b is required as a cofactor.

It is found in the mitochondrion inner membrane. Its function is as follows. Component of the ubiquinol-cytochrome c reductase complex (complex III or cytochrome b-c1 complex) that is part of the mitochondrial respiratory chain. The b-c1 complex mediates electron transfer from ubiquinol to cytochrome c. Contributes to the generation of a proton gradient across the mitochondrial membrane that is then used for ATP synthesis. The sequence is that of Cytochrome b (mt-cyb) from Petromyzon marinus (Sea lamprey).